The chain runs to 441 residues: uncharacterized protein (441 aa).

Positions 121 to 143 (TLSPSIVSEQQQQQQQQQQQQQQ) are enriched in low complexity. Disordered regions lie at residues 121–146 (TLSP…QAIS) and 371–392 (SDAD…TAPN). A compositionally biased stretch (polar residues) spans 382 to 391 (PTSAPSTTAP).

This is an uncharacterized protein from Dictyostelium discoideum (Social amoeba).